Consider the following 560-residue polypeptide: uncharacterized protein (560 aa).

Residues 1 to 29 form the signal peptide; it reads MKSALKKSVVSTSISLILASGMAAFAAHA. Positions 66, 67, and 132 each coordinate Ca(2+). The Nucleophile role is filled by Ser-132. Ser-132 carries the 3-oxoalanine (Ser) modification. The active site involves His-185. Positions 345 and 346 each coordinate Ca(2+).

This sequence belongs to the sulfatase family. It depends on Ca(2+) as a cofactor. In terms of processing, the conversion to 3-oxoalanine (also known as C-formylglycine, FGly), of a serine or cysteine residue in prokaryotes and of a cysteine residue in eukaryotes, is critical for catalytic activity.

This is an uncharacterized protein from Escherichia coli (strain K12).